The primary structure comprises 270 residues: G-box-binding factor 4 (270 aa).

Positions 1–46 are disordered; sequence MASFKLMSSSNSDLSRRNSSSASSSPSIRSSHHLRPNPHADHSRIS. Residues 8–29 are compositionally biased toward low complexity; that stretch reads SSSNSDLSRRNSSSASSSPSIR. Ser-27 bears the Phosphoserine mark. A bZIP domain is found at 187 to 250; that stretch reads AAQRQKRMIK…YKKLMEVLIP (64 aa). The tract at residues 190–208 is basic motif; it reads RQKRMIKNRESAARSRERK. Residues 215–229 are leucine-zipper; that stretch reads LETLAAKLEEENEQL. Residues 250-270 are disordered; sequence PVDEKPRPPSRPLSRSHSLEW. The span at 261–270 shows a compositional bias: low complexity; the sequence is PLSRSHSLEW.

The protein belongs to the bZIP family. DNA-binding heterodimer with GBF2 and GBF3; non DNA-binding homodimer.

The protein localises to the nucleus. Binds to the G-box motif (5'-CCACGTGG-3') of the rbcS-1A gene promoter. G-box and G-box-like motifs are cis-acting elements defined in promoters of certain plant genes which are regulated by such diverse stimuli as light-induction or hormone control. This is G-box-binding factor 4 (GBF4) from Arabidopsis thaliana (Mouse-ear cress).